A 552-amino-acid polypeptide reads, in one-letter code: Glutamine--tRNA ligase (552 aa).

The 'HIGH' region signature appears at 34–44 (PEPNGYLHIGH). Residues 35–37 (EPN) and 41–47 (HIGHAKS) contribute to the ATP site. Aspartate 67 and tyrosine 212 together coordinate L-glutamine. ATP is bound by residues threonine 231, 261-262 (RL), and 269-271 (MSK). The short motif at 268–272 (IMSKR) is the 'KMSKS' region element.

This sequence belongs to the class-I aminoacyl-tRNA synthetase family. Monomer.

The protein resides in the cytoplasm. The enzyme catalyses tRNA(Gln) + L-glutamine + ATP = L-glutaminyl-tRNA(Gln) + AMP + diphosphate. This chain is Glutamine--tRNA ligase, found in Pectobacterium atrosepticum (strain SCRI 1043 / ATCC BAA-672) (Erwinia carotovora subsp. atroseptica).